A 305-amino-acid chain; its full sequence is Glycine betaine-binding protein YehZ (305 aa).

Positions 1 to 23 are cleaved as a signal peptide; the sequence is MPLLKLWAGSLVMLAAVSLPLQA.

The protein belongs to the OsmX family. In terms of assembly, the complex is composed of two ATP-binding proteins (YehX), two transmembrane proteins (YehW and YehY) and a solute-binding protein (YehZ).

It is found in the periplasm. Functionally, part of an ABC transporter complex involved in low-affinity glycine betaine uptake. Binds glycine betaine with low affinity. This is Glycine betaine-binding protein YehZ (yehZ) from Escherichia coli (strain K12).